The chain runs to 501 residues: Lysine--tRNA ligase (501 aa).

Residues E411 and E418 each coordinate Mg(2+).

It belongs to the class-II aminoacyl-tRNA synthetase family. In terms of assembly, homodimer. It depends on Mg(2+) as a cofactor.

Its subcellular location is the cytoplasm. It carries out the reaction tRNA(Lys) + L-lysine + ATP = L-lysyl-tRNA(Lys) + AMP + diphosphate. The polypeptide is Lysine--tRNA ligase (Aliivibrio fischeri (strain ATCC 700601 / ES114) (Vibrio fischeri)).